The sequence spans 80 residues: Exodeoxyribonuclease 7 small subunit (80 aa).

Belongs to the XseB family. In terms of assembly, heterooligomer composed of large and small subunits.

It is found in the cytoplasm. It carries out the reaction Exonucleolytic cleavage in either 5'- to 3'- or 3'- to 5'-direction to yield nucleoside 5'-phosphates.. Its function is as follows. Bidirectionally degrades single-stranded DNA into large acid-insoluble oligonucleotides, which are then degraded further into small acid-soluble oligonucleotides. In Pseudomonas putida (strain W619), this protein is Exodeoxyribonuclease 7 small subunit.